A 572-amino-acid polypeptide reads, in one-letter code: O-fucosyltransferase 16 (572 aa).

Residues 17-37 (LLPLVIAVSLSLLILFAFLSF) traverse the membrane as a helical; Signal-anchor for type II membrane protein segment. N92 and N136 each carry an N-linked (GlcNAc...) asparagine glycan. Residue 274 to 276 (HLR) coordinates substrate. Residues N446 and N506 are each glycosylated (N-linked (GlcNAc...) asparagine). The disordered stretch occupies residues 498-572 (ESRKLGKKNK…EPELEAMLSD (75 aa)). The span at 521–541 (DQTEEDDPDWSEPDYEEEQSD) shows a compositional bias: acidic residues. N549 carries N-linked (GlcNAc...) asparagine glycosylation. The segment covering 554–566 (DYDDPSTSDEPEL) has biased composition (acidic residues).

Belongs to the glycosyltransferase GT106 family.

The protein resides in the membrane. It participates in glycan metabolism. This Arabidopsis thaliana (Mouse-ear cress) protein is O-fucosyltransferase 16.